We begin with the raw amino-acid sequence, 479 residues long: MRSIVLPSLALALFSQRARADTTLTIDPTSNWGTWEGWGVSLAWWAKAFGNRDDLASVFFSRNNQAVNGQTLPGLGFNIVRYNAGACSNNSYDGSTMVVSPNIKPSRQMDGFWLDWASSDPSSSSWNWNVDANQRAMLQKAKANGANIFELFSNSPMWWMCNNHNPSGSGSSDNLQSWNYQNHAVYLADIAQHAQQSWRIQFQSVEAFNEPSSSWWTAEGTQEGCHFDVSTMATVIGYLNTELSSRGLSSFVASSDENTYDLAISTWQGFNSSTRNIVKRINVHGYQDGGGRRDTLYSLASQAGKRLWNSEYGDSDASGKSMYQNLLLDFTWLHPTAWVYWQAIDGAGWGLIVGDNDNLTLSSASTKYFVLAQLTRHIRQGMQILTTPDVNTAVAYDAGSQKLVIVTANWGSAQTITFDLTRARTAGSNGATVPRWSTQTGGGDQYRSYTDTKINNGKFSASFSSGQVQTFEVSGVVLQ.

A signal peptide spans 1–20 (MRSIVLPSLALALFSQRARA). Asn-89 carries an N-linked (GlcNAc...) asparagine glycan. Glu-210 serves as the catalytic Proton donor. An N-linked (GlcNAc...) asparagine glycan is attached at Asn-271. Catalysis depends on Glu-311, which acts as the Nucleophile. A glycan (N-linked (GlcNAc...) asparagine) is linked at Asn-358.

The enzyme catalyses Endohydrolysis of (1-&gt;6)-beta-D-galactosidic linkages in arabinogalactan proteins and (1-&gt;3):(1-&gt;6)-beta-galactans to yield galactose and beta-(1-&gt;6)-galactaobiose as the final products.. Its function is as follows. Hydrolyzes galactooligomers with a degree of polymerization higher than 3. Hydrolyzes radish root arabinogalactan-protein. Does not hydrolyze dextran, arabinan, starch, laminarin, beta-1,4- and beta-1,3-galactans, larch wood arabinogalactan or acid-insoluble polygalacturonic acid. The chain is Endo-beta-1,6-galactanase from Hypocrea rufa (Trichoderma viride).